The sequence spans 158 residues: NAD(P)H-quinone oxidoreductase subunit J, chloroplastic (158 aa).

This sequence belongs to the complex I 30 kDa subunit family. In terms of assembly, NDH is composed of at least 16 different subunits, 5 of which are encoded in the nucleus.

It is found in the plastid. The protein localises to the chloroplast thylakoid membrane. It carries out the reaction a plastoquinone + NADH + (n+1) H(+)(in) = a plastoquinol + NAD(+) + n H(+)(out). The enzyme catalyses a plastoquinone + NADPH + (n+1) H(+)(in) = a plastoquinol + NADP(+) + n H(+)(out). In terms of biological role, NDH shuttles electrons from NAD(P)H:plastoquinone, via FMN and iron-sulfur (Fe-S) centers, to quinones in the photosynthetic chain and possibly in a chloroplast respiratory chain. The immediate electron acceptor for the enzyme in this species is believed to be plastoquinone. Couples the redox reaction to proton translocation, and thus conserves the redox energy in a proton gradient. The chain is NAD(P)H-quinone oxidoreductase subunit J, chloroplastic from Oenothera argillicola (Appalachian evening primrose).